Consider the following 244-residue polypeptide: Glucosamine-6-phosphate deaminase (244 aa).

Residue D67 is the Proton acceptor; for enolization step of the active site. Catalysis depends on N136, which acts as the For ring-opening step. H138 acts as the Proton acceptor; for ring-opening step in catalysis. E143 (for ring-opening step) is an active-site residue.

It belongs to the glucosamine/galactosamine-6-phosphate isomerase family. NagB subfamily.

The enzyme catalyses alpha-D-glucosamine 6-phosphate + H2O = beta-D-fructose 6-phosphate + NH4(+). Its pathway is amino-sugar metabolism; N-acetylneuraminate degradation; D-fructose 6-phosphate from N-acetylneuraminate: step 5/5. In terms of biological role, catalyzes the reversible isomerization-deamination of glucosamine 6-phosphate (GlcN6P) to form fructose 6-phosphate (Fru6P) and ammonium ion. The polypeptide is Glucosamine-6-phosphate deaminase (Clostridium botulinum (strain ATCC 19397 / Type A)).